The chain runs to 164 residues: MERFLENVMYASRWLLAPVYFGLSLALIALALKFFQDILHVLPNVFALAEADLILVLLSLVDMTLVGGLLVMVMFSGYENFVSQLDISAGKEKLNWLGKMDATSLKNKVAASIVAISSIHLLRVFMDAKNVPDNKLMWYVIIHLTFVLSAFVMGYLDRLTRHNH.

3 helical membrane-spanning segments follow: residues leucine 15–phenylalanine 35, leucine 53–valine 73, and leucine 136–leucine 156.

It belongs to the UPF0114 family.

Its subcellular location is the cell membrane. In Salmonella dublin (strain CT_02021853), this protein is UPF0114 protein YqhA.